Consider the following 459-residue polypeptide: tRNA modification GTPase MnmE (459 aa).

Positions 21, 84, and 123 each coordinate (6S)-5-formyl-5,6,7,8-tetrahydrofolate. In terms of domain architecture, TrmE-type G spans 219 to 378 (GVTVALAGAV…LLVLLYNFVL (160 aa)). Residues 229–234 (NAGKSS), 248–254 (TEHPGTT), and 273–276 (DTAG) contribute to the GTP site. Residues S233 and T254 each contribute to the Mg(2+) site. K459 is a binding site for (6S)-5-formyl-5,6,7,8-tetrahydrofolate.

It belongs to the TRAFAC class TrmE-Era-EngA-EngB-Septin-like GTPase superfamily. TrmE GTPase family. In terms of assembly, homodimer. Heterotetramer of two MnmE and two MnmG subunits. K(+) serves as cofactor.

The protein localises to the cytoplasm. Its function is as follows. Exhibits a very high intrinsic GTPase hydrolysis rate. Involved in the addition of a carboxymethylaminomethyl (cmnm) group at the wobble position (U34) of certain tRNAs, forming tRNA-cmnm(5)s(2)U34. The protein is tRNA modification GTPase MnmE of Lawsonia intracellularis (strain PHE/MN1-00).